Here is a 210-residue protein sequence, read N- to C-terminus: Cdc42 effector protein 2 (210 aa).

N-acetylserine is present on Ser2. The CRIB domain occupies 30-44 (ISPPLGDFRHTIHIG). 3 positions are modified to phosphoserine: Ser31, Ser101, and Ser141. The tract at residues 124-145 (AQAPPKPPRLHLETPQASPQEA) is disordered.

It belongs to the BORG/CEP family. As to quaternary structure, interacts with CDC42 and RHOQ, in a GTP-dependent manner, and with SEPT7.

It localises to the endomembrane system. Its subcellular location is the cytoplasm. It is found in the cytoskeleton. Its function is as follows. Probably involved in the organization of the actin cytoskeleton. May act downstream of CDC42 to induce actin filament assembly leading to cell shape changes. Induces pseudopodia formation in fibroblasts in a CDC42-dependent manner. This is Cdc42 effector protein 2 (CDC42EP2) from Bos taurus (Bovine).